Here is a 327-residue protein sequence, read N- to C-terminus: Phenylalanine--tRNA ligase alpha subunit (327 aa).

Mg(2+) is bound at residue glutamate 252.

The protein belongs to the class-II aminoacyl-tRNA synthetase family. Phe-tRNA synthetase alpha subunit type 1 subfamily. As to quaternary structure, tetramer of two alpha and two beta subunits. The cofactor is Mg(2+).

The protein resides in the cytoplasm. The enzyme catalyses tRNA(Phe) + L-phenylalanine + ATP = L-phenylalanyl-tRNA(Phe) + AMP + diphosphate + H(+). In Salmonella newport (strain SL254), this protein is Phenylalanine--tRNA ligase alpha subunit.